The chain runs to 128 residues: Large ribosomal subunit protein bL17 (128 aa).

It belongs to the bacterial ribosomal protein bL17 family. As to quaternary structure, part of the 50S ribosomal subunit. Contacts protein L32.

In Streptococcus sanguinis (strain SK36), this protein is Large ribosomal subunit protein bL17.